Reading from the N-terminus, the 245-residue chain is Ubiquinone/menaquinone biosynthesis C-methyltransferase UbiE (245 aa).

S-adenosyl-L-methionine contacts are provided by residues Thr71, Asp92, and 118–119 (DA).

It belongs to the class I-like SAM-binding methyltransferase superfamily. MenG/UbiE family.

It catalyses the reaction a 2-demethylmenaquinol + S-adenosyl-L-methionine = a menaquinol + S-adenosyl-L-homocysteine + H(+). The catalysed reaction is a 2-methoxy-6-(all-trans-polyprenyl)benzene-1,4-diol + S-adenosyl-L-methionine = a 5-methoxy-2-methyl-3-(all-trans-polyprenyl)benzene-1,4-diol + S-adenosyl-L-homocysteine + H(+). It participates in quinol/quinone metabolism; menaquinone biosynthesis; menaquinol from 1,4-dihydroxy-2-naphthoate: step 2/2. Its pathway is cofactor biosynthesis; ubiquinone biosynthesis. In terms of biological role, methyltransferase required for the conversion of demethylmenaquinol (DMKH2) to menaquinol (MKH2) and the conversion of 2-polyprenyl-6-methoxy-1,4-benzoquinol (DDMQH2) to 2-polyprenyl-3-methyl-6-methoxy-1,4-benzoquinol (DMQH2). This Neisseria meningitidis serogroup C / serotype 2a (strain ATCC 700532 / DSM 15464 / FAM18) protein is Ubiquinone/menaquinone biosynthesis C-methyltransferase UbiE.